The chain runs to 396 residues: DNA excision repair protein ERCC-8 (396 aa).

WD repeat units follow at residues 33–73, 88–129, 133–173, 177–216, 235–274, 281–321, and 325–363; these read NKDR…LYDL, CSIG…VWDT, QTAD…LCDL, SCSHILQGHRQEILAVSWSPRYDYILATASADSRVKLWDV, QAVESANTAHNGKVNGLCFTSDGLHLLTVGTDNRMRLWNS, LVNY…VYTV, and EQITMLKGHYKTVDCCVFQSNFQELYSGSRDCNILAWVP. The interval 371–396 is disordered; the sequence is DDDETTTKSQLNPAFEDAWSSSDEEG. Serine 390, serine 391, and serine 392 each carry phosphoserine.

In terms of assembly, part of the CSA complex (also named DCX(ERCC8) complex), a DCX E3 ubiquitin-protein ligase complex containing ERCC8, RBX1, DDB1 and CUL4A; the CSA complex interacts with RNA polymerase II; upon UV irradiation it interacts with the COP9 signalosome and preferentially with the hyperphosphorylated form of RNA polymerase II. Interacts with ERCC6/CSB (via CIM motif); promoting recruitment to lesion-stalled RNA polymerase II (Pol II). Interacts with KIAA1530/UVSSA. Interacts with a subunit of RNA polymerase II TFIIH.

The protein resides in the nucleus. It is found in the chromosome. It localises to the nucleus matrix. The protein operates within protein modification; protein ubiquitination. Its function is as follows. Substrate-recognition component of the CSA complex, a DCX (DDB1-CUL4-X-box) E3 ubiquitin-protein ligase complex, involved in transcription-coupled nucleotide excision repair (TC-NER), a process during which RNA polymerase II-blocking lesions are rapidly removed from the transcribed strand of active genes. Following recruitment to lesion-stalled RNA polymerase II (Pol II), the CSA complex mediates ubiquitination of Pol II subunit POLR2A/RPB1 at 'Lys-1268', a critical TC-NER checkpoint, governing RNA Pol II stability and initiating DNA damage excision by TFIIH recruitment. The CSA complex also promotes the ubiquitination and subsequent proteasomal degradation of ERCC6/CSB in a UV-dependent manner; ERCC6 degradation is essential for the recovery of RNA synthesis after transcription-coupled repair. Also plays a role in DNA double-strand breaks (DSSBs) repair by non-homologous end joining (NHEJ). This is DNA excision repair protein ERCC-8 from Homo sapiens (Human).